A 590-amino-acid polypeptide reads, in one-letter code: Acetolactate synthase large subunit (590 aa).

Glutamate 61 provides a ligand contact to thiamine diphosphate. FAD-binding positions include arginine 163, 271-292 (HGTA…LGAR), and 314-333 (DIDP…IVGD). Positions 405 to 484 (QHQMWSAQFL…VKIIIINNRW (80 aa)) are thiamine pyrophosphate binding. Mg(2+) is bound by residues aspartate 455 and asparagine 482.

The protein belongs to the TPP enzyme family. As to quaternary structure, dimer of large and small chains. Mg(2+) serves as cofactor. Requires thiamine diphosphate as cofactor.

The protein resides in the plastid. It localises to the chloroplast. It catalyses the reaction 2 pyruvate + H(+) = (2S)-2-acetolactate + CO2. The protein operates within amino-acid biosynthesis; L-isoleucine biosynthesis; L-isoleucine from 2-oxobutanoate: step 1/4. It functions in the pathway amino-acid biosynthesis; L-valine biosynthesis; L-valine from pyruvate: step 1/4. This is Acetolactate synthase large subunit (ilvB) from Pyropia yezoensis (Susabi-nori).